Consider the following 477-residue polypeptide: Glycogen synthase (477 aa).

An ADP-alpha-D-glucose-binding site is contributed by Lys-15.

The protein belongs to the glycosyltransferase 1 family. Bacterial/plant glycogen synthase subfamily.

The catalysed reaction is [(1-&gt;4)-alpha-D-glucosyl](n) + ADP-alpha-D-glucose = [(1-&gt;4)-alpha-D-glucosyl](n+1) + ADP + H(+). The protein operates within glycan biosynthesis; glycogen biosynthesis. Synthesizes alpha-1,4-glucan chains using ADP-glucose. The chain is Glycogen synthase from Citrobacter koseri (strain ATCC BAA-895 / CDC 4225-83 / SGSC4696).